Consider the following 461-residue polypeptide: Cysteine--tRNA ligase (461 aa).

C30 is a Zn(2+) binding site. Positions 32–42 (VTIYDLCHIGH) match the 'HIGH' region motif. Zn(2+)-binding residues include C211, H236, and E240. A 'KMSKS' region motif is present at residues 268–272 (KMSKS). K271 contributes to the ATP binding site.

This sequence belongs to the class-I aminoacyl-tRNA synthetase family. Monomer. It depends on Zn(2+) as a cofactor.

The protein localises to the cytoplasm. It catalyses the reaction tRNA(Cys) + L-cysteine + ATP = L-cysteinyl-tRNA(Cys) + AMP + diphosphate. In Shewanella sp. (strain W3-18-1), this protein is Cysteine--tRNA ligase.